Consider the following 1066-residue polypeptide: Vinculin (1066 aa).

The interval 1–835 is N-terminal globular head; sequence MPVFHTRTIE…GAVAKVREAF (835 aa). Ser-97 carries the phosphoserine modification. Positions 168-208 are talin-interaction; it reads MTKMAKMIDERQQELTHQEHRVMLVNSMNTVKELLPVLISA. N6-acetyllysine is present on Lys-173. 3 tandem repeats follow at residues 259–369, 370–479, and 480–589. The interval 259–589 is 3 X 112 AA tandem repeats; that stretch reads ASKDTEAMKR…LKDLKAQMQE (331 aa). Phosphoserine is present on residues Ser-260, Ser-272, Ser-275, Ser-290, Ser-346, and Ser-434. At Lys-496 the chain carries N6-acetyllysine. Tyr-537 bears the Phosphotyrosine mark. A phosphoserine mark is found at Ser-574, Ser-579, and Ser-600. Phosphothreonine is present on residues Thr-604 and Thr-672. Residue Ser-721 is modified to Phosphoserine. Positions 741 to 764 are interaction with ACTN4; the sequence is MANIQPQMLVAGATSIARRANRIL. A phosphoserine mark is found at Ser-795 and Ser-809. Tyr-822 carries the post-translational modification Phosphotyrosine. The tract at residues 836–878 is linker (Pro-rich); that stretch reads QPQEPDFPPPPPDLEQLRLTDELAPPKPPLPEGEVPPPRPPPP. The segment at 857 to 887 is disordered; sequence ELAPPKPPLPEGEVPPPRPPPPEEKDEEFPE. A compositionally biased stretch (pro residues) spans 860 to 876; the sequence is PPKPPLPEGEVPPPRPP. The segment at 879 to 1066 is C-terminal tail; sequence EEKDEEFPEQ…RWVRKTPWYQ (188 aa). 2 facilitates phospholipid membrane insertion regions span residues 935–978 and 1052–1066; these read RLVR…KRIR and AGFTLRWVRKTPWYQ. Position 1065 is a phosphotyrosine; by SRC-type Tyr-kinases (Tyr-1065).

The protein belongs to the vinculin/alpha-catenin family. In terms of assembly, exhibits self-association properties. Part of a complex composed of THSD1, PTK2/FAK1, TLN1 and VCL. Interacts with APBB1IP, NRAP and TLN1. Interacts with SYNM. Interacts with CTNNB1 and this interaction is necessary for its localization to the cell-cell junctions and for its function in regulating cell surface expression of E-cadherin. Interacts with SORBS1. Interacts with SYNM. Interacts with CTNNA1. Binds to ACTN4; this interaction triggers conformational changes. Interacts with FLII. Phosphorylated; on serines, threonines and tyrosines. Phosphorylation on Tyr-1065 in activated platelets affects head-tail interactions and cell spreading but has no effect on actin binding nor on localization to focal adhesion plaques. In terms of processing, acetylated; mainly by myristic acid but also by a small amount of palmitic acid.

It localises to the cell membrane. Its subcellular location is the cell junction. It is found in the adherens junction. The protein localises to the focal adhesion. The protein resides in the cytoplasm. It localises to the cytoskeleton. Its subcellular location is the sarcolemma. It is found in the cell projection. The protein localises to the podosome. Functionally, actin filament (F-actin)-binding protein involved in cell-matrix adhesion and cell-cell adhesion. Regulates cell-surface E-cadherin expression and potentiates mechanosensing by the E-cadherin complex. May also play important roles in cell morphology and locomotion. This Mus musculus (Mouse) protein is Vinculin (Vcl).